Reading from the N-terminus, the 126-residue chain is Large ribosomal subunit protein bL12 (126 aa).

This sequence belongs to the bacterial ribosomal protein bL12 family. As to quaternary structure, homodimer. Part of the ribosomal stalk of the 50S ribosomal subunit. Forms a multimeric L10(L12)X complex, where L10 forms an elongated spine to which 2 to 4 L12 dimers bind in a sequential fashion. Binds GTP-bound translation factors.

Forms part of the ribosomal stalk which helps the ribosome interact with GTP-bound translation factors. Is thus essential for accurate translation. The polypeptide is Large ribosomal subunit protein bL12 (Geotalea daltonii (strain DSM 22248 / JCM 15807 / FRC-32) (Geobacter daltonii)).